We begin with the raw amino-acid sequence, 135 residues long: 6,7-dimethyl-8-ribityllumazine synthase (135 aa).

5-amino-6-(D-ribitylamino)uracil contacts are provided by residues F12, 44–46, and 68–70; these read AYD and CVI. 73–74 contacts (2S)-2-hydroxy-3-oxobutyl phosphate; sequence AT. The active-site Proton donor is H76. L101 contacts 5-amino-6-(D-ribitylamino)uracil. R116 contributes to the (2S)-2-hydroxy-3-oxobutyl phosphate binding site.

This sequence belongs to the DMRL synthase family.

It carries out the reaction (2S)-2-hydroxy-3-oxobutyl phosphate + 5-amino-6-(D-ribitylamino)uracil = 6,7-dimethyl-8-(1-D-ribityl)lumazine + phosphate + 2 H2O + H(+). It participates in cofactor biosynthesis; riboflavin biosynthesis; riboflavin from 2-hydroxy-3-oxobutyl phosphate and 5-amino-6-(D-ribitylamino)uracil: step 1/2. Its function is as follows. Catalyzes the formation of 6,7-dimethyl-8-ribityllumazine by condensation of 5-amino-6-(D-ribitylamino)uracil with 3,4-dihydroxy-2-butanone 4-phosphate. This is the penultimate step in the biosynthesis of riboflavin. This Methanoculleus marisnigri (strain ATCC 35101 / DSM 1498 / JR1) protein is 6,7-dimethyl-8-ribityllumazine synthase.